We begin with the raw amino-acid sequence, 453 residues long: Armadillo repeat-containing X-linked protein 1 (453 aa).

At 1–6 the chain is on the mitochondrial intermembrane side; sequence MGRTRE. Mitochondrion outer membrane (MOM)-targeting sequence regions lie at residues 1–6 and 26–36; these read MGRTRE and RLAWGRDENEK. A helical; Signal-anchor transmembrane segment spans residues 7 to 29; that stretch reads AGCVAAGVVIGAGACYCVYRLAW. At 30-453 the chain is on the cytoplasmic side; it reads GRDENEKIWD…VKVLKVLTKL (424 aa). The disordered stretch occupies residues 140–182; that stretch reads PSLPCPGGRGGGCHPTRSGSRAGGRASGKSKGKARSKSTRAPA. Residues 167–177 show a composition bias toward basic residues; the sequence is GKSKGKARSKS. ARM repeat units lie at residues 195–235, 237–276, 358–398, and 415–453; these read PYKI…NNAA, SFNQ…NLSV, PAMT…NIND, and SSLF…LTKL.

This sequence belongs to the eutherian X-chromosome-specific Armcx family. In terms of assembly, interacts with MIRO1.

The protein resides in the mitochondrion. Its subcellular location is the mitochondrion outer membrane. Its function is as follows. Regulates mitochondrial transport during axon regeneration. Increases the proportion of motile mitochondria by recruiting stationary mitochondria into the motile pool. Enhances mitochondria movement and neurite growth in both adult axons and embryonic neurons. Promotes neuronal survival and axon regeneration after nerve injury. May link mitochondria to the Trak1-kinesin motor complex via its interaction with MIRO1. The sequence is that of Armadillo repeat-containing X-linked protein 1 (ARMCX1) from Pongo abelii (Sumatran orangutan).